The chain runs to 315 residues: Calumenin-A (315 aa).

Residues Met1–Ser19 form the signal peptide. 6 EF-hand domains span residues Glu68–Lys103, Tyr104–Asp139, Gln151–Glu186, Met188–Glu223, Trp229–Asp264, and His265–Ser300. Residues Asp81, Asp83, Asp85, Glu92, Asp117, Asn119, Asp121, Met123, and Glu128 each contribute to the Ca(2+) site. N-linked (GlcNAc...) asparagine glycosylation is present at Asn131. Ca(2+) contacts are provided by Asp164, Asn166, Asp168, Glu175, Asp201, Asn203, Asp205, Glu212, Asp242, Asn244, Asp246, Lys248, Glu253, Asp278, Asn280, Asp282, Lys284, and Glu289. A Prevents secretion from ER motif is present at residues His312–Phe315.

It belongs to the CREC family. As to quaternary structure, interacts with ggcx.

It is found in the endoplasmic reticulum membrane. It localises to the golgi apparatus. The protein localises to the secreted. The protein resides in the melanosome. Its subcellular location is the sarcoplasmic reticulum lumen. Its function is as follows. Involved in regulation of vitamin K-dependent carboxylation of multiple N-terminal glutamate residues. Seems to inhibit gamma-carboxylase ggcx. Binds 7 calcium ions with a low affinity. The sequence is that of Calumenin-A (calua) from Danio rerio (Zebrafish).